Consider the following 329-residue polypeptide: Protein RecA (329 aa).

An ATP-binding site is contributed by 63-70 (GNESSGKT).

The protein belongs to the RecA family.

The protein resides in the cytoplasm. In terms of biological role, can catalyze the hydrolysis of ATP in the presence of single-stranded DNA, the ATP-dependent uptake of single-stranded DNA by duplex DNA, and the ATP-dependent hybridization of homologous single-stranded DNAs. It interacts with LexA causing its activation and leading to its autocatalytic cleavage. The polypeptide is Protein RecA (Malacoplasma penetrans (strain HF-2) (Mycoplasma penetrans)).